The sequence spans 465 residues: Nucleolar and spindle-associated protein 1 (465 aa).

Positions 32–61 (ADKLLRALKAHLKNEARKENENQDEIQTSA) form a coiled coil. Disordered stretches follow at residues 44–123 (KNEA…QNHS), 148–207 (VEVP…TPNF), and 252–294 (GVPA…GSAK). The span at 56–75 (EIQTSASSCDEPEIQTSSQE) shows a compositional bias: polar residues. A compositionally biased stretch (basic and acidic residues) spans 76-86 (QAEREPDDHVT). Positions 87–96 (KTRGRRKTVH) are enriched in basic residues. S152 is subject to Phosphoserine. The span at 154 to 166 (PNESQGDENTVSS) shows a compositional bias: polar residues. Residues 169–179 (HGIDGNEDPRV) are compositionally biased toward basic and acidic residues. Position 204 is a phosphothreonine (T204). Positions 262–405 (GRLSVACTPG…HKGKLKPWGQ (144 aa)) are interaction with microtubules. Phosphoserine is present on S265. A Phosphothreonine modification is found at T269. Phosphoserine occurs at positions 272, 292, 299, and 334. The interval 308–338 (SAATKDNEHKRSLTKTPARKSPHVTTSVNTP) is disordered. Residues T337, T361, and T372 each carry the phosphothreonine modification. Phosphoserine is present on residues S375 and S386. Residues 396-454 (HKGKLKPWGQSKENNSLHEHVNRVSFHKKTYKQPRLQTREEQRKKHERERKEKKEKVLG) form a disordered region. The KEN box signature appears at 407 to 413 (KENNSLH). Positions 430–457 (RLQTREEQRKKHERERKEKKEKVLGVRR) form a coiled coil. A compositionally biased stretch (basic and acidic residues) spans 432–453 (QTREEQRKKHERERKEKKEKVL).

It belongs to the NUSAP family. Interacts with DNA and microtubules. Microtubule bundling is inhibited by IPO7, KPNA2 and KPNB1 while association with DNA is also inhibited by IPO7 and KPNA2. In terms of processing, ubiquitinated. Ubiquitination by FZR1 may lead to proteasome-dependent degradation of this protein.

Its subcellular location is the cytoplasm. It localises to the nucleus. The protein resides in the nucleolus. It is found in the cytoskeleton. The protein localises to the spindle. Its subcellular location is the chromosome. Its function is as follows. Microtubule-associated protein with the capacity to bundle and stabilize microtubules. May associate with chromosomes and promote the organization of mitotic spindle microtubules around them. The polypeptide is Nucleolar and spindle-associated protein 1 (NUSAP1) (Bos taurus (Bovine)).